Consider the following 301-residue polypeptide: Mitochondrial carnitine/acylcarnitine carrier protein (301 aa).

At Ala-2 the chain carries N-acetylalanine. Over 2-12 (ADQPKPISPLK) the chain is Cytoplasmic. Solcar repeat units follow at residues 8 to 99 (ISPL…GKKL), 108 to 196 (LSYP…LKNI), and 207 to 293 (LSAP…AMKF). The chain crosses the membrane as a helical span at residues 13–31 (NLLAGGFGGVCLVFVGHPL). Over 32 to 73 (DTVKVRLQTQPPSLPGQPPMYSGTFDCFRKTLFREGITGLYR) the chain is Mitochondrial matrix. The chain crosses the membrane as a helical span at residues 74–93 (GMAAPIIGVTPMFAVCFFGF). Over 94 to 112 (GLGKKLQQKHPEDVLSYPQ) the chain is Cytoplasmic. The chain crosses the membrane as a helical span at residues 113 to 131 (LFAAGMLSGVFTTGIMTPG). Residues 132-170 (ERIKCLLQIQASSGESKYTGTLDCAKKLYQEFGIRGIYK) lie on the Mitochondrial matrix side of the membrane. N6-acetyllysine occurs at positions 148 and 157. Position 170 is an N6-acetyllysine; alternate (Lys-170). Lys-170 is modified (N6-succinyllysine; alternate). Residues 171–190 (GTVLTLMRDVPASGMYFMTY) traverse the membrane as a helical segment. The Cytoplasmic portion of the chain corresponds to 191-211 (EWLKNIFTPEGKRVSELSAPR). Residues 212 to 230 (ILVAGGIAGIFNWAVAIPP) traverse the membrane as a helical segment. The Mitochondrial matrix portion of the chain corresponds to 231-267 (DVLKSRFQTAPPGKYPNGFRDVLRELIRDEGVTSLYK). Residues 268 to 287 (GFNAVMIRAFPANAACFLGF) form a helical membrane-spanning segment. Residues 288-301 (EVAMKFLNWATPNL) are Cytoplasmic-facing.

Belongs to the mitochondrial carrier (TC 2.A.29) family.

Its subcellular location is the mitochondrion inner membrane. The enzyme catalyses O-acetyl-(R)-carnitine(in) + (R)-carnitine(out) = O-acetyl-(R)-carnitine(out) + (R)-carnitine(in). The catalysed reaction is an O-acyl-(R)-carnitine(in) + (R)-carnitine(out) = an O-acyl-(R)-carnitine(out) + (R)-carnitine(in). It catalyses the reaction O-propanoyl-(R)-carnitine(in) + (R)-carnitine(out) = O-propanoyl-(R)-carnitine(out) + (R)-carnitine(in). It carries out the reaction O-hexadecanoyl-(R)-carnitine(in) + (R)-carnitine(out) = O-hexadecanoyl-(R)-carnitine(out) + (R)-carnitine(in). The enzyme catalyses O-octanoyl-(R)-carnitine(in) + (R)-carnitine(out) = O-octanoyl-(R)-carnitine(out) + (R)-carnitine(in). The catalysed reaction is (R)-carnitine(in) = (R)-carnitine(out). Its function is as follows. Mediates the electroneutral exchange of acylcarnitines (O-acyl-(R)-carnitine or L-acylcarnitine) of different acyl chain lengths (ranging from O-acetyl-(R)-carnitine to long-chain O-acyl-(R)-carnitines) with free carnitine ((R)-carnitine or L-carnitine) across the mitochondrial inner membrane, via a ping-pong mechanism. Key player in the mitochondrial oxidation pathway, it translocates the fatty acids in the form of acylcarnitines into the mitochondrial matrix, where the carnitine palmitoyltransferase 2 (CPT-2) activates them to undergo fatty acid beta-oxidation. Catalyzes the unidirectional transport (uniport) of carnitine at lower rates than the antiport (exchange). This Homo sapiens (Human) protein is Mitochondrial carnitine/acylcarnitine carrier protein.